A 271-amino-acid polypeptide reads, in one-letter code: MAGPQQQPPYLHLAELTASQFLEIWKHFDADGNGYIEGKELENFFQELEKARKGSGMMSKSDNFGEKMKEFMQKYDKNSDGKIEMAELAQILPTEENFLLCFRQHVGSSAEFMEAWRKYDTDRSGYIEANELKGFLSDLLKKANRPYDEPKLQEYTQTILRMFDLNGDGKLGLSEMSRLLPVQENFLLKFQGMKLTSEEFNAIFTFYDKDGSGYIDENELDALLKDLYEKNKKEMNIQQLTTYRKSVMSLAEAGKLYRKDLEIVLCSEPPM.

EF-hand domains are found at residues 16–51 (LTAS…LEKA), 63–98 (NFGE…EENF), 107–142 (GSSA…LLKK), 151–186 (KLQE…QENF), 195–230 (LTSE…LYEK), and 235–270 (MNIQ…SEPP). Ca(2+)-binding residues include Asp-29, Asp-31, Asn-33, Tyr-35, Glu-40, Asp-76, Asn-78, Asp-80, Lys-82, Glu-87, Asp-120, Asp-122, Ser-124, Tyr-126, Glu-131, Asp-164, Asn-166, Asp-168, Lys-170, Glu-175, Asp-208, Asp-210, Ser-212, Tyr-214, and Glu-219. Residue Tyr-214 is modified to Phosphotyrosine.

It belongs to the calbindin family.

Its subcellular location is the synapse. It localises to the cell projection. The protein localises to the dendrite. Calcium-binding protein involved in calcium homeostasis and signal transduction. It plays a critical role in buffering intracellular calcium levels and modulating calcium-dependent signaling pathways. Predominantly expressed in specific neuronal populations, influences synaptic plasticity and neuronal excitability, contributing to learning and memory. During embryonic development, it facilitates neuronal differentiation and maturation. The polypeptide is Calretinin (Calb2) (Rattus norvegicus (Rat)).